Consider the following 209-residue polypeptide: NADH-ubiquinone oxidoreductase subunit 9 (209 aa).

The protein belongs to the complex I 30 kDa subunit family. As to quaternary structure, complex I is composed of about 30 different subunits.

The protein resides in the mitochondrion inner membrane. It catalyses the reaction a ubiquinone + NADH + 5 H(+)(in) = a ubiquinol + NAD(+) + 4 H(+)(out). Its function is as follows. Core subunit of the mitochondrial membrane respiratory chain NADH dehydrogenase (Complex I) that is believed to belong to the minimal assembly required for catalysis. Complex I functions in the transfer of electrons from NADH to the respiratory chain. The immediate electron acceptor for the enzyme is believed to be ubiquinone. The polypeptide is NADH-ubiquinone oxidoreductase subunit 9 (NAD9) (Paramecium tetraurelia).